We begin with the raw amino-acid sequence, 164 residues long: Crossover junction endodeoxyribonuclease RuvC (164 aa).

Catalysis depends on residues aspartate 7, glutamate 67, and aspartate 140. Mg(2+) is bound by residues aspartate 7, glutamate 67, and aspartate 140.

Belongs to the RuvC family. As to quaternary structure, homodimer which binds Holliday junction (HJ) DNA. The HJ becomes 2-fold symmetrical on binding to RuvC with unstacked arms; it has a different conformation from HJ DNA in complex with RuvA. In the full resolvosome a probable DNA-RuvA(4)-RuvB(12)-RuvC(2) complex forms which resolves the HJ. The cofactor is Mg(2+).

The protein resides in the cytoplasm. The catalysed reaction is Endonucleolytic cleavage at a junction such as a reciprocal single-stranded crossover between two homologous DNA duplexes (Holliday junction).. Functionally, the RuvA-RuvB-RuvC complex processes Holliday junction (HJ) DNA during genetic recombination and DNA repair. Endonuclease that resolves HJ intermediates. Cleaves cruciform DNA by making single-stranded nicks across the HJ at symmetrical positions within the homologous arms, yielding a 5'-phosphate and a 3'-hydroxyl group; requires a central core of homology in the junction. The consensus cleavage sequence is 5'-(A/T)TT(C/G)-3'. Cleavage occurs on the 3'-side of the TT dinucleotide at the point of strand exchange. HJ branch migration catalyzed by RuvA-RuvB allows RuvC to scan DNA until it finds its consensus sequence, where it cleaves and resolves the cruciform DNA. In Chloroflexus aggregans (strain MD-66 / DSM 9485), this protein is Crossover junction endodeoxyribonuclease RuvC.